The chain runs to 154 residues: Superoxide dismutase [Cu-Zn] (154 aa).

Cu cation-binding residues include histidine 47, histidine 49, and histidine 64. The cysteines at positions 58 and 147 are disulfide-linked. Zn(2+) is bound by residues histidine 64, histidine 72, histidine 81, and aspartate 84. Histidine 121 is a Cu cation binding site. The segment covering 125–136 has biased composition (basic and acidic residues); the sequence is DDLGKGGNEESL. Residues 125–144 form a disordered region; sequence DDLGKGGNEESLKTGNAGPR. Residue arginine 144 participates in substrate binding.

The protein belongs to the Cu-Zn superoxide dismutase family. In terms of assembly, homodimer. The cofactor is Cu cation. Zn(2+) is required as a cofactor.

The protein resides in the cytoplasm. It carries out the reaction 2 superoxide + 2 H(+) = H2O2 + O2. Destroys radicals which are normally produced within the cells and which are toxic to biological systems. This Cordyceps tenuipes (Entomopathogenic fungus) protein is Superoxide dismutase [Cu-Zn] (SOD1).